The sequence spans 224 residues: Putative O-methyltransferase MLBr01075 (224 aa).

S-adenosyl-L-methionine is bound by residues valine 51, glutamate 73, 75–76 (GT), serine 81, aspartate 99, and isoleucine 100. Aspartate 147 serves as a coordination point for substrate. Residue aspartate 149 participates in S-adenosyl-L-methionine binding.

Belongs to the class I-like SAM-binding methyltransferase superfamily. Cation-dependent O-methyltransferase family.

The sequence is that of Putative O-methyltransferase MLBr01075 from Mycobacterium leprae (strain Br4923).